Here is a 163-residue protein sequence, read N- to C-terminus: Putative 4-hydroxy-4-methyl-2-oxoglutarate aldolase (163 aa).

Substrate-binding positions include 76 to 79 (GDML) and R98. D99 provides a ligand contact to a divalent metal cation.

The protein belongs to the class II aldolase/RraA-like family. As to quaternary structure, homotrimer. A divalent metal cation serves as cofactor.

The enzyme catalyses 4-hydroxy-4-methyl-2-oxoglutarate = 2 pyruvate. It carries out the reaction oxaloacetate + H(+) = pyruvate + CO2. Functionally, catalyzes the aldol cleavage of 4-hydroxy-4-methyl-2-oxoglutarate (HMG) into 2 molecules of pyruvate. Also contains a secondary oxaloacetate (OAA) decarboxylase activity due to the common pyruvate enolate transition state formed following C-C bond cleavage in the retro-aldol and decarboxylation reactions. In Pseudomonas putida (strain W619), this protein is Putative 4-hydroxy-4-methyl-2-oxoglutarate aldolase.